A 406-amino-acid chain; its full sequence is Succinylornithine transaminase (406 aa).

Lys-252 is modified (N6-(pyridoxal phosphate)lysine).

It belongs to the class-III pyridoxal-phosphate-dependent aminotransferase family. AstC subfamily. The cofactor is pyridoxal 5'-phosphate.

It carries out the reaction N(2)-succinyl-L-ornithine + 2-oxoglutarate = N-succinyl-L-glutamate 5-semialdehyde + L-glutamate. The protein operates within amino-acid degradation; L-arginine degradation via AST pathway; L-glutamate and succinate from L-arginine: step 3/5. Its function is as follows. Catalyzes the transamination of N(2)-succinylornithine and alpha-ketoglutarate into N(2)-succinylglutamate semialdehyde and glutamate. Can also act as an acetylornithine aminotransferase. This Escherichia fergusonii (strain ATCC 35469 / DSM 13698 / CCUG 18766 / IAM 14443 / JCM 21226 / LMG 7866 / NBRC 102419 / NCTC 12128 / CDC 0568-73) protein is Succinylornithine transaminase.